We begin with the raw amino-acid sequence, 89 residues long: Arminin 375 (89 aa).

The first 18 residues, 1 to 18, serve as a signal peptide directing secretion; it reads MKAVFAILFLAFIALTYA. The propeptide occupies 19–57; that stretch reads KSYDEVKEEIKNEVEREIFEDLEEESDELDNYVEESNDA. A86 bears the Alanine amide mark.

It belongs to the arminin family. As to expression, expressed in entodermal epithelium along the body column.

The protein localises to the secreted. Its subcellular location is the target cell membrane. Functionally, antimicrobial peptide with a broad-spectrum antimicrobial activity. Keeps its antibacterial activity under a wide range of salt concentrations that mimic physiological conditions of human blood, which is surprising, since Hydra is an obligate freshwater animal with nearly no salt tolerance. Does not affect red blood cells. The polypeptide is Arminin 375 (Hydra oligactis (Brown hydra)).